An 832-amino-acid chain; its full sequence is Ventricular zone-expressed PH domain-containing protein homolog 1 (832 aa).

Positions 201–319 are interaction with TGFBR1; the sequence is AELLALMSQL…RYLVSQLANM (119 aa). The disordered stretch occupies residues 497–519; it reads DTHGSQLRNSSASHPSIIHSEPE. A compositionally biased stretch (polar residues) spans 499–510; sequence HGSQLRNSSASH. The tract at residues 663–832 is interaction with TGFBR1; it reads ESTFPQQKDL…RESREVTTYL (170 aa). A PH domain is found at 716-818; sequence QPLIEGKLKE…WLQCINVALA (103 aa).

This sequence belongs to the MELT/VEPH family. Interacts with TGFBR1.

The protein resides in the cell membrane. Functionally, interacts with TGF-beta receptor type-1 (TGFBR1) and inhibits dissociation of activated SMAD2 from TGFBR1, impeding its nuclear accumulation and resulting in impaired TGF-beta signaling. May also affect FOXO, Hippo and Wnt signaling. This Rattus norvegicus (Rat) protein is Ventricular zone-expressed PH domain-containing protein homolog 1 (Veph1).